A 186-amino-acid polypeptide reads, in one-letter code: Protein C (186 aa).

The span at Met-1–Ser-15 shows a compositional bias: polar residues. The tract at residues Met-1 to Gly-44 is disordered.

This sequence belongs to the morbillivirus protein C family. Interacts with the phosphoprotein (via C-terminus); this interaction allows C to associate with the ribonucleocapsid.

Its subcellular location is the host nucleus. The protein localises to the host cytoplasmic vesicle. Functionally, ribonucleocapsid-associated protein that interacts with the phosphoprotein (P), thereby increasing replication accuracy and processivity of the polymerase complex. In Homo sapiens (Human), this protein is Protein C (P/V/C).